A 215-amino-acid polypeptide reads, in one-letter code: Large ribosomal subunit protein uL4 (215 aa).

The disordered stretch occupies residues 51–88; the sequence is KGMGEVSGTTKKPYRQKGTGNARQGSLRAPQFRTGGAV.

This sequence belongs to the universal ribosomal protein uL4 family. Part of the 50S ribosomal subunit.

In terms of biological role, one of the primary rRNA binding proteins, this protein initially binds near the 5'-end of the 23S rRNA. It is important during the early stages of 50S assembly. It makes multiple contacts with different domains of the 23S rRNA in the assembled 50S subunit and ribosome. Its function is as follows. Forms part of the polypeptide exit tunnel. In Granulibacter bethesdensis (strain ATCC BAA-1260 / CGDNIH1), this protein is Large ribosomal subunit protein uL4.